Consider the following 393-residue polypeptide: Methylthioribose kinase (393 aa).

ATP contacts are provided by residues Asn38, Lys53, and 107 to 109 (EDL). A substrate-binding site is contributed by Asp225. Position 242–244 (242–244 (DPE)) interacts with ATP. Substrate is bound at residue Arg332.

The protein belongs to the methylthioribose kinase family. Homodimer.

The enzyme catalyses 5-(methylsulfanyl)-D-ribose + ATP = 5-(methylsulfanyl)-alpha-D-ribose 1-phosphate + ADP + H(+). It functions in the pathway amino-acid biosynthesis; L-methionine biosynthesis via salvage pathway; S-methyl-5-thio-alpha-D-ribose 1-phosphate from S-methyl-5'-thioadenosine (hydrolase route): step 2/2. Its function is as follows. Catalyzes the phosphorylation of methylthioribose into methylthioribose-1-phosphate. This Bacillus cereus (strain ZK / E33L) protein is Methylthioribose kinase.